A 417-amino-acid polypeptide reads, in one-letter code: D-galactonate dehydratase family member SeV_A0456 (417 aa).

Substrate is bound by residues Q43 and H127. Residue Y158 is the Proton donor/acceptor of the active site. D223 contributes to the Mg(2+) binding site. H225 serves as the catalytic Proton donor/acceptor. Mg(2+)-binding residues include E249 and E275. Residues E275, R296, H325, D329, and E352 each contribute to the substrate site.

Belongs to the mandelate racemase/muconate lactonizing enzyme family. GalD subfamily. It depends on Mg(2+) as a cofactor.

The catalysed reaction is D-gluconate = 2-dehydro-3-deoxy-D-gluconate + H2O. Its function is as follows. Has low D-gluconate dehydratase activity (in vitro), suggesting that it has no significant role in D-gluconate degradation in vivo. Has no detectable activity with a panel of 70 other acid sugars (in vitro). This is D-galactonate dehydratase family member SeV_A0456 from Salmonella virchow (strain SL491).